The following is a 657-amino-acid chain: MAEGSGEVVAVSATGAANGLNNGAGGTSATTCNPLSRKLHKILETRLDNDKEMLEALKALSTFFVENSLRTRRNLRGDIERKSLAINEEFVSIFKEVKEELESISEDVQAMSNCCQDMTSRLQAAKEQTQDLIVKTTKLQSESQKLEIRAQVADAFLSKFQLTSDEMSLLRGTREGPITEDFFKALGRVKQIHNDVKVLLRTNQQTAGLEIMEQMALLQETAYERLYRWAQSECRTLTQESCDVSPVLTQAMEALQDRPVLYKYTLDEFGTARRSTVVRGFIDALTRGGPGGTPRPIEMHSHDPLRYVGDMLAWLHQATASEKEHLEALLKHVTTQGVEENIQEVVGHITEGVCRPLKVRIEQVIVAEPGAVLLYKISNLLKFYHHTISGIVGNSATALLTTIEEMHLLSKKIFFNSLSLHASKLMDKVELPPPDLGPSSALNQTLMLLREVLASHDSSVVPLDARQADFVQVLSCVLDPLLQMCTVSASNLGTADMATFMVNSLYMMKTTLALFEFTDRRLEMLQFQIEAHLDTLINEQASYVLTRVGLSYIYNTVQQHKPEQGSLANMPNLDSVTLKAAMVQFDRYLSAPDNLLIPQLNFLLSATVKEQIVKQSTELVCRAYGEVYAAVMNPINEYKDPENILHRSPQQVQTLLS.

It belongs to the COG6 family. Component of the conserved oligomeric Golgi complex which is composed of eight different subunits and is required for normal Golgi morphology and localization.

The protein localises to the golgi apparatus membrane. Its function is as follows. Required for normal Golgi function. The polypeptide is Conserved oligomeric Golgi complex subunit 6 (COG6) (Homo sapiens (Human)).